A 1277-amino-acid polypeptide reads, in one-letter code: Y' element ATP-dependent helicase YEL077C (1277 aa).

A Helicase ATP-binding domain is found at 222–399 (EIYMADTPSV…LQRIGLTGLA (178 aa)). 235–242 (APPGYGKT) lines the ATP pocket. The short motif at 345-348 (DEFH) is the DEAH box element. Residues 454 to 605 (ALKLLLALFE…EFYGLESKKG (152 aa)) enclose the Helicase C-terminal domain. 2 disordered regions span residues 696–763 (NVRT…NATT) and 775–895 (TTKS…NRFH). Residues 775 to 878 (TTKSINSSTN…ATTTESTNAS (104 aa)) are compositionally biased toward low complexity. Positions 879–895 (AKEDANKDGNAEDNRFH) are enriched in basic and acidic residues.

The protein belongs to the helicase family. Yeast subtelomeric Y' repeat subfamily.

In terms of biological role, catalyzes DNA unwinding and is involved in telomerase-independent telomere maintenance. This is Y' element ATP-dependent helicase YEL077C from Saccharomyces cerevisiae (strain ATCC 204508 / S288c) (Baker's yeast).